A 212-amino-acid chain; its full sequence is Uridine kinase (212 aa).

13-20 (GASASGKS) lines the ATP pocket.

It belongs to the uridine kinase family.

Its subcellular location is the cytoplasm. It carries out the reaction uridine + ATP = UMP + ADP + H(+). The enzyme catalyses cytidine + ATP = CMP + ADP + H(+). Its pathway is pyrimidine metabolism; CTP biosynthesis via salvage pathway; CTP from cytidine: step 1/3. It functions in the pathway pyrimidine metabolism; UMP biosynthesis via salvage pathway; UMP from uridine: step 1/1. This Shewanella oneidensis (strain ATCC 700550 / JCM 31522 / CIP 106686 / LMG 19005 / NCIMB 14063 / MR-1) protein is Uridine kinase.